The chain runs to 669 residues: MNNPTNESLRNVAIVGPYGSGKTTLLESVLWVSGSVSRKGNIKDGNTVSDSSPEAKARQMSVEVSVAGIDYENLRLNFLDCPGSIEFAQETYGALVGAGTAVIVCEADVSRVLTLAPLFKFLDDWAIPHLVFINKMDRAKQPFGEVLQALKSVSSRPLIPQQYPIYKGEELQGYIDLITEQAYQYHTGSAADPIALPAELAGAEHQARQEMLEALADFDDRLLEELLEEVEPPQAEIEADFKQELGADLIVPVVLGAAEQDFGVRPLLDVLIKEAPDPSVTAARRSLSTDGSGPVIAQVLKTYFTPQGRLSLARIWQGTLREADSLNGQRLGGIYRLFGNQQTPVQTATVGEIVGLARLENINTGTTLSTADVKPLPFVEPLPPVYGLAIAPEQRKDEVKLSTALGKLVEEDPSLTWEQNTETQEVILWGQGEIHLKVALERLERQYKLPMVSQQPQVPYKETIRKGTEVHGRYKHQTGGHGAFGDVYLTIKPLERGNGFSFSETIVGGVVPKQYIPGVEMGVREYLAKGPLGYPVVDIAVTLTDGSYHNVDSSEQAFKQAARLAMTEGMPQCNPVLLEPILSVNVTTPTEFTSRVLQLVSGHRGQILGYEARSDWKSWDQVAAHLPQAEMQNFIIELRSLTLGVGNFTWQSDHLQEVPDKFAPNLRPD.

Positions 7 to 279 (ESLRNVAIVG…VLIKEAPDPS (273 aa)) constitute a tr-type G domain. The interval 16 to 23 (GPYGSGKT) is G1. 16–23 (GPYGSGKT) provides a ligand contact to GTP. The tract at residues 59-63 (QMSVE) is G2. A G3 region spans residues 80–83 (DCPG). Residues 80–84 (DCPGS) and 134–137 (NKMD) each bind GTP. The tract at residues 134–137 (NKMD) is G4. A G5 region spans residues 257–259 (AAE).

This sequence belongs to the TRAFAC class translation factor GTPase superfamily. Classic translation factor GTPase family. EF-G/EF-2 subfamily.

The sequence is that of Elongation factor G-like protein from Synechocystis sp. (strain ATCC 27184 / PCC 6803 / Kazusa).